Reading from the N-terminus, the 278-residue chain is 4-deoxy-L-threo-5-hexosulose-uronate ketol-isomerase (278 aa).

Zn(2+) contacts are provided by histidine 196, histidine 198, glutamate 203, and histidine 245.

This sequence belongs to the KduI family. Zn(2+) is required as a cofactor.

It catalyses the reaction 5-dehydro-4-deoxy-D-glucuronate = 3-deoxy-D-glycero-2,5-hexodiulosonate. Its pathway is glycan metabolism; pectin degradation; 2-dehydro-3-deoxy-D-gluconate from pectin: step 4/5. Catalyzes the isomerization of 5-dehydro-4-deoxy-D-glucuronate to 3-deoxy-D-glycero-2,5-hexodiulosonate. The protein is 4-deoxy-L-threo-5-hexosulose-uronate ketol-isomerase of Salmonella dublin (strain CT_02021853).